Here is a 462-residue protein sequence, read N- to C-terminus: UDP-N-acetylmuramoylalanine--D-glutamate ligase (462 aa).

Position 117–123 (117–123) interacts with ATP; sequence GTNGKTT.

Belongs to the MurCDEF family.

It localises to the cytoplasm. It carries out the reaction UDP-N-acetyl-alpha-D-muramoyl-L-alanine + D-glutamate + ATP = UDP-N-acetyl-alpha-D-muramoyl-L-alanyl-D-glutamate + ADP + phosphate + H(+). Its pathway is cell wall biogenesis; peptidoglycan biosynthesis. Cell wall formation. Catalyzes the addition of glutamate to the nucleotide precursor UDP-N-acetylmuramoyl-L-alanine (UMA). This chain is UDP-N-acetylmuramoylalanine--D-glutamate ligase, found in Parasynechococcus marenigrum (strain WH8102).